We begin with the raw amino-acid sequence, 300 residues long: Glutamyl-Q tRNA(Asp) synthetase (300 aa).

Residues 8–12 (RFAPT) and D44 contribute to the L-glutamate site. The short motif at 11-21 (PTPSGDLHLGS) is the 'HIGH' region element. Residues C100, C102, Y122, and C126 each contribute to the Zn(2+) site. Y181 and R199 together coordinate L-glutamate. The 'KMSKS' region signature appears at 237-241 (KLSKQ). K240 lines the ATP pocket.

The protein belongs to the class-I aminoacyl-tRNA synthetase family. GluQ subfamily. Zn(2+) serves as cofactor.

Functionally, catalyzes the tRNA-independent activation of glutamate in presence of ATP and the subsequent transfer of glutamate onto a tRNA(Asp). Glutamate is transferred on the 2-amino-5-(4,5-dihydroxy-2-cyclopenten-1-yl) moiety of the queuosine in the wobble position of the QUC anticodon. The polypeptide is Glutamyl-Q tRNA(Asp) synthetase (Synechococcus sp. (strain ATCC 27144 / PCC 6301 / SAUG 1402/1) (Anacystis nidulans)).